Consider the following 613-residue polypeptide: MPTTFTPNSPASSCSIHHRASPSRGARNSVRFTRPRAAAAATNSVLSAPSSVPPAYVPPPPPPPTKMFPEAGDAAAAKAAARRCGKKKDGLNFFQRAAAVALDAFEEGFITNVLERPHALPRTADPAVQIAGNFAPVGEQPPVRSLPVSGRIPPFINGVYARNGANPHFEPTAGHHLFDGDGMVHAVRIRNGAAESYACRFTETARLGQERALGRAVFPKAIGELHGHSGIARLALFYARGLCGLVDPSHGTGVANAGLVYFNGRLLAMSEDDLPYQVRVTADGDLETVGRYDFDGQLGCAMIAHPKLDPVSGELFALSYDVIKKPYLKYFYFDADGTKSPDVEIELEQPTMIHDFAITENFVVVPDHQVVFKLGEMFRGGSPVVLDREKTSRFGVLPKHATSSLEMVWVDVPDCFCFHLWNAWEEAESGEVVVVGSCMTPADSIFNESDEHLESVLTEIRLNTRTGESTRRAVLPPAAQVNLEVGMVNRAMLGRKTRYAYLAVAEPWPKVSGFAKVDLATGELTKFEYGEGRFGGEPCFVPMGGAGAAASPARGEDDGYILSFVRDEAAGTSELLVVNAADMRLEATVQLPSRVPYGFHGTFINAGELATQA.

The span at 1 to 15 (MPTTFTPNSPASSCS) shows a compositional bias: polar residues. The N-terminal 36 residues, 1-36 (MPTTFTPNSPASSCSIHHRASPSRGARNSVRFTRPR), are a transit peptide targeting the chloroplast. Residues 1-62 (MPTTFTPNSP…PPAYVPPPPP (62 aa)) are disordered. A compositionally biased stretch (low complexity) spans 37–50 (AAAAATNSVLSAPS). Residues 51 to 62 (SVPPAYVPPPPP) show a composition bias toward pro residues. Fe cation is bound by residues His305, His354, His419, and His600.

It belongs to the carotenoid oxygenase family. The cofactor is Fe(2+).

It is found in the plastid. Its subcellular location is the chloroplast. It catalyses the reaction a 9-cis-epoxycarotenoid + O2 = a 12'-apo-carotenal + 2-cis,4-trans-xanthoxin. The catalysed reaction is 9-cis-violaxanthin + O2 = (3S,5R,6S)-5,6-epoxy-3-hydroxy-5,6-dihydro-12'-apo-beta-caroten-12'-al + 2-cis,4-trans-xanthoxin. The enzyme catalyses 9'-cis-neoxanthin + O2 = (3S,5R,6R)-3,5-dihydroxy-6,7-didehydro-5,6-dihydro-12'-apo-beta-caroten-12'-al + 2-cis,4-trans-xanthoxin. Its function is as follows. Has a 11,12(11',12') 9-cis epoxycarotenoid cleavage activity. Catalyzes the first step of abscisic-acid biosynthesis from carotenoids. This Oryza sativa subsp. japonica (Rice) protein is 9-cis-epoxycarotenoid dioxygenase NCED5, chloroplastic.